Reading from the N-terminus, the 244-residue chain is tRNA (guanine-N(1)-)-methyltransferase (244 aa).

S-adenosyl-L-methionine is bound by residues Gly123 and 143–148 (LGDFVM).

It belongs to the RNA methyltransferase TrmD family. Homodimer.

It localises to the cytoplasm. It catalyses the reaction guanosine(37) in tRNA + S-adenosyl-L-methionine = N(1)-methylguanosine(37) in tRNA + S-adenosyl-L-homocysteine + H(+). Specifically methylates guanosine-37 in various tRNAs. The polypeptide is tRNA (guanine-N(1)-)-methyltransferase (Ruegeria sp. (strain TM1040) (Silicibacter sp.)).